Consider the following 380-residue polypeptide: Chaperone protein DnaJ (380 aa).

Residues 5 to 70 (DYYEALGVAR…RKRTAYDQFG (66 aa)) form the J domain. A CR-type zinc finger spans residues 137-215 (GTTAKIRIPT…CRGEGRVREH (79 aa)). 8 residues coordinate Zn(2+): cysteine 150, cysteine 153, cysteine 167, cysteine 170, cysteine 189, cysteine 192, cysteine 203, and cysteine 206. 4 CXXCXGXG motif repeats span residues 150–157 (CKACEGSG), 167–174 (CPTCGGHG), 189–196 (CPRCHGSG), and 203–210 (CSTCRGEG). Residues 222–247 (IPPGVDTGDRIRLTGEGEAGESGGPP) are disordered.

Belongs to the DnaJ family. Homodimer. Zn(2+) serves as cofactor.

The protein resides in the cytoplasm. Participates actively in the response to hyperosmotic and heat shock by preventing the aggregation of stress-denatured proteins and by disaggregating proteins, also in an autonomous, DnaK-independent fashion. Unfolded proteins bind initially to DnaJ; upon interaction with the DnaJ-bound protein, DnaK hydrolyzes its bound ATP, resulting in the formation of a stable complex. GrpE releases ADP from DnaK; ATP binding to DnaK triggers the release of the substrate protein, thus completing the reaction cycle. Several rounds of ATP-dependent interactions between DnaJ, DnaK and GrpE are required for fully efficient folding. Also involved, together with DnaK and GrpE, in the DNA replication of plasmids through activation of initiation proteins. This is Chaperone protein DnaJ from Nitrosococcus oceani (strain ATCC 19707 / BCRC 17464 / JCM 30415 / NCIMB 11848 / C-107).